Reading from the N-terminus, the 361-residue chain is Deoxyhypusine hydroxylase (361 aa).

HEAT-like PBS-type repeat units follow at residues leucine 59 to asparagine 85, valine 94 to aspartate 120, glutamine 183 to aspartate 211, and phenylalanine 216 to aspartate 242. Residues histidine 61, glutamate 62, histidine 96, and glutamate 97 each coordinate Fe cation. Fe cation is bound by residues histidine 218, glutamate 219, histidine 251, and glutamate 252.

Belongs to the deoxyhypusine hydroxylase family. The cofactor is Fe(2+).

The protein localises to the cytoplasm. Its subcellular location is the nucleus. It carries out the reaction [eIF5A protein]-deoxyhypusine + AH2 + O2 = [eIF5A protein]-hypusine + A + H2O. It functions in the pathway protein modification; eIF5A hypusination. Its function is as follows. Catalyzes the hydroxylation of the N(6)-(4-aminobutyl)-L-lysine intermediate to form hypusine, an essential post-translational modification only found in mature eIF-5A factor. In Cryptococcus neoformans var. neoformans serotype D (strain JEC21 / ATCC MYA-565) (Filobasidiella neoformans), this protein is Deoxyhypusine hydroxylase.